The sequence spans 234 residues: Proteasome subunit alpha type-2 (234 aa).

Ala-2 carries the N-acetylalanine modification. Phosphotyrosine is present on Tyr-6. 3 positions are modified to phosphoserine: Ser-7, Ser-14, and Ser-16. Tyr-24 carries the post-translational modification Phosphotyrosine. Lys-70 is subject to N6-acetyllysine. Phosphotyrosine is present on residues Tyr-76 and Tyr-121. Lys-171 bears the N6-acetyllysine mark.

The protein belongs to the peptidase T1A family. The 26S proteasome consists of a 20S proteasome core and two 19S regulatory subunits. The 20S proteasome core is a barrel-shaped complex made of 28 subunits that are arranged in four stacked rings. The two outer rings are each formed by seven alpha subunits, and the two inner rings are formed by seven beta subunits. The proteolytic activity is exerted by three beta-subunits PSMB5, PSMB6 and PSMB7. In terms of processing, phosphorylated on tyrosine residues; which may be important for nuclear import. Detected in liver (at protein level).

It localises to the cytoplasm. The protein localises to the nucleus. In terms of biological role, component of the 20S core proteasome complex involved in the proteolytic degradation of most intracellular proteins. This complex plays numerous essential roles within the cell by associating with different regulatory particles. Associated with two 19S regulatory particles, forms the 26S proteasome and thus participates in the ATP-dependent degradation of ubiquitinated proteins. The 26S proteasome plays a key role in the maintenance of protein homeostasis by removing misfolded or damaged proteins that could impair cellular functions, and by removing proteins whose functions are no longer required. Associated with the PA200 or PA28, the 20S proteasome mediates ubiquitin-independent protein degradation. This type of proteolysis is required in several pathways including spermatogenesis (20S-PA200 complex) or generation of a subset of MHC class I-presented antigenic peptides (20S-PA28 complex). The polypeptide is Proteasome subunit alpha type-2 (Psma2) (Mus musculus (Mouse)).